The following is a 349-amino-acid chain: Phosphate acetyltransferase (349 aa).

This sequence belongs to the phosphate acetyltransferase and butyryltransferase family.

The protein resides in the cytoplasm. The catalysed reaction is acetyl-CoA + phosphate = acetyl phosphate + CoA. It participates in metabolic intermediate biosynthesis; acetyl-CoA biosynthesis; acetyl-CoA from acetate: step 2/2. In Rickettsia typhi (strain ATCC VR-144 / Wilmington), this protein is Phosphate acetyltransferase (pta).